Consider the following 265-residue polypeptide: Cytochrome c oxidase subunit 3 (265 aa).

6 helical membrane passes run 16–36 (PWPISGSLGALATTVGGVMYM), 41–61 (GGATLLSLGLIFILYTMFVWW), 81–101 (GPRYGFILFIVSEVMFLFALF), 162–182 (AVYALVATVSLALVFTAFQGM), 200–220 (FFLATGFHGFHVIIGTLFSIV), and 245–265 (WHFVDVVRLFPFVSIYWWGGI).

It belongs to the cytochrome c oxidase subunit 3 family. In terms of assembly, component of the cytochrome c oxidase (complex IV, CIV), a multisubunit enzyme composed of a catalytic core of 3 subunits and several supernumerary subunits. The complex exists as a monomer or a dimer and forms supercomplexes (SCs) in the inner mitochondrial membrane with ubiquinol-cytochrome c oxidoreductase (cytochrome b-c1 complex, complex III, CIII).

It is found in the mitochondrion inner membrane. The catalysed reaction is 4 Fe(II)-[cytochrome c] + O2 + 8 H(+)(in) = 4 Fe(III)-[cytochrome c] + 2 H2O + 4 H(+)(out). In terms of biological role, component of the cytochrome c oxidase, the last enzyme in the mitochondrial electron transport chain which drives oxidative phosphorylation. The respiratory chain contains 3 multisubunit complexes succinate dehydrogenase (complex II, CII), ubiquinol-cytochrome c oxidoreductase (cytochrome b-c1 complex, complex III, CIII) and cytochrome c oxidase (complex IV, CIV), that cooperate to transfer electrons derived from NADH and succinate to molecular oxygen, creating an electrochemical gradient over the inner membrane that drives transmembrane transport and the ATP synthase. Cytochrome c oxidase is the component of the respiratory chain that catalyzes the reduction of oxygen to water. Electrons originating from reduced cytochrome c in the intermembrane space (IMS) are transferred via the dinuclear copper A center (CU(A)) of subunit 2 and heme A of subunit 1 to the active site in subunit 1, a binuclear center (BNC) formed by heme A3 and copper B (CU(B)). The BNC reduces molecular oxygen to 2 water molecules using 4 electrons from cytochrome c in the IMS and 4 protons from the mitochondrial matrix. The chain is Cytochrome c oxidase subunit 3 (COX3) from Helianthus annuus (Common sunflower).